A 250-amino-acid polypeptide reads, in one-letter code: Proteasome subunit alpha type-4-1 (250 aa).

It belongs to the peptidase T1A family. In terms of assembly, the 26S proteasome consists of a 20S proteasome core and two 19S regulatory subunits. The 20S proteasome core is composed of 28 subunits that are arranged in four stacked rings, resulting in a barrel-shaped structure. The two end rings are each formed by seven alpha subunits, and the two central rings are each formed by seven beta subunits. The catalytic chamber with the active sites is on the inside of the barrel.

Its subcellular location is the cytoplasm. The protein resides in the nucleus. Its function is as follows. The proteasome is a multicatalytic proteinase complex which is characterized by its ability to cleave peptides with Arg, Phe, Tyr, Leu, and Glu adjacent to the leaving group at neutral or slightly basic pH. The proteasome has an ATP-dependent proteolytic activity. This is Proteasome subunit alpha type-4-1 from Oryza sativa subsp. indica (Rice).